Consider the following 337-residue polypeptide: Ketol-acid reductoisomerase (NADP(+)) (337 aa).

The KARI N-terminal Rossmann domain maps to 3-183 (VEMFYDDDAD…GGTRAGVIKT (181 aa)). Residues 26–29 (YGSQ), K49, S52, S54, and 84–87 (DTAQ) each bind NADP(+). Residue H109 is part of the active site. An NADP(+)-binding site is contributed by G135. The KARI C-terminal knotted domain maps to 184–329 (TFKEETETDL…KKLRDLMSWV (146 aa)). Residues D192, E196, E228, and E232 each coordinate Mg(2+). S253 contacts substrate.

The protein belongs to the ketol-acid reductoisomerase family. The cofactor is Mg(2+).

The catalysed reaction is (2R)-2,3-dihydroxy-3-methylbutanoate + NADP(+) = (2S)-2-acetolactate + NADPH + H(+). It carries out the reaction (2R,3R)-2,3-dihydroxy-3-methylpentanoate + NADP(+) = (S)-2-ethyl-2-hydroxy-3-oxobutanoate + NADPH + H(+). Its pathway is amino-acid biosynthesis; L-isoleucine biosynthesis; L-isoleucine from 2-oxobutanoate: step 2/4. It functions in the pathway amino-acid biosynthesis; L-valine biosynthesis; L-valine from pyruvate: step 2/4. Its function is as follows. Involved in the biosynthesis of branched-chain amino acids (BCAA). Catalyzes an alkyl-migration followed by a ketol-acid reduction of (S)-2-acetolactate (S2AL) to yield (R)-2,3-dihydroxy-isovalerate. In the isomerase reaction, S2AL is rearranged via a Mg-dependent methyl migration to produce 3-hydroxy-3-methyl-2-ketobutyrate (HMKB). In the reductase reaction, this 2-ketoacid undergoes a metal-dependent reduction by NADPH to yield (R)-2,3-dihydroxy-isovalerate. The polypeptide is Ketol-acid reductoisomerase (NADP(+)) (Rhodococcus erythropolis (strain PR4 / NBRC 100887)).